A 694-amino-acid polypeptide reads, in one-letter code: uncharacterized protein (694 aa).

A coiled-coil region spans residues 15–51; the sequence is HKEKMELLDQFDNERKEWESQWKIMQKKIEELCREVK. Disordered regions lie at residues 259 to 286, 461 to 490, and 643 to 680; these read LKRN…EQAY, QNHS…QSND, and NASH…RRTT. Polar residues-rich tracts occupy residues 272-283 and 476-490; these read STSRNFPSSDSE and DTSS…QSND. Positions 663–677 are enriched in low complexity; sequence SRWASRSPSAPPALR.

This is an uncharacterized protein from Homo sapiens (Human).